Reading from the N-terminus, the 549-residue chain is Probable glucomannan 4-beta-mannosyltransferase 4 (549 aa).

A helical transmembrane segment spans residues 35 to 55; the sequence is VAPVLQFAVWACMAMSVMLVL. Asp-151 is an active-site residue. The substrate site is built by Asp-210 and Asp-212. Asp-304 is a catalytic residue. 4 helical membrane passes run 383 to 403, 406 to 426, 497 to 517, and 523 to 543; these read VVAPILTFLFYCVVIPLSVMV, VSIPVWGMVYIPTAITIMNAI, IYIPELMVAFYLLVCASYDLV, and YYLYIYLQAFAFIALGFGFAG.

Belongs to the glycosyltransferase 2 family. Plant cellulose synthase-like A subfamily.

The protein localises to the golgi apparatus membrane. The catalysed reaction is GDP-mannose + (glucomannan)n = GDP + (glucomannan)n+1.. Its function is as follows. Probable mannan synthase which consists of a 4-beta-mannosyltransferase activity on mannan using GDP-mannose. The beta-1,4-mannan product is the backbone for galactomannan synthesis by galactomannan galactosyltransferase. Galactomannan is a noncellulosic polysaccharides of plant cell wall. This is Probable glucomannan 4-beta-mannosyltransferase 4 from Oryza sativa subsp. japonica (Rice).